The primary structure comprises 732 residues: Elongation factor 2 (732 aa).

The region spanning 19–260 (ERIRNIGIAA…MVVRHLPSPI (242 aa)) is the tr-type G domain. GTP contacts are provided by residues 28–35 (AHIDHGKT), 94–98 (DTPGH), and 148–151 (NKVD). At histidine 597 the chain carries Diphthamide.

The protein belongs to the TRAFAC class translation factor GTPase superfamily. Classic translation factor GTPase family. EF-G/EF-2 subfamily.

It is found in the cytoplasm. In terms of biological role, catalyzes the GTP-dependent ribosomal translocation step during translation elongation. During this step, the ribosome changes from the pre-translocational (PRE) to the post-translocational (POST) state as the newly formed A-site-bound peptidyl-tRNA and P-site-bound deacylated tRNA move to the P and E sites, respectively. Catalyzes the coordinated movement of the two tRNA molecules, the mRNA and conformational changes in the ribosome. The protein is Elongation factor 2 (fusA) of Pyrococcus horikoshii (strain ATCC 700860 / DSM 12428 / JCM 9974 / NBRC 100139 / OT-3).